The chain runs to 258 residues: MESLSELQNPLLDKNSKHMVMADYGYGGDFHSNQYQENIINYFVTGGGGGGGGGGGGGGVAVTGGNGKAKSQLLDATSLHLAVEAFYKPNFILYKDDVSGKGKDYKNECCETTFMEKKDKEVVVETPSTEDPQAKLLDENDVKIQTVSYEVEEEEYVEYETDCSSDSESEDNFIVIPPRDHLGLAIFSMLCCFWPLGIAAFYFSQGTSKAVTKGDFPLASIASRRALFLAALSITIGTGVYVGVVVALIAYLSKPGHI.

Residues M1–L182 lie on the Extracellular side of the membrane. Residues G183–F203 traverse the membrane as a helical segment. Residues S204–F228 lie on the Cytoplasmic side of the membrane. Residues L229–I249 form a helical membrane-spanning segment. The Extracellular portion of the chain corresponds to A250–I258.

The protein belongs to the CD225/Dispanin family.

It localises to the membrane. The protein localises to the golgi apparatus. The protein resides in the cis-Golgi network. This Danio rerio (Zebrafish) protein is Synapse differentiation-inducing gene protein 1-like (syndig1l).